Reading from the N-terminus, the 2214-residue chain is Non-reducing polyketide synthase dpmpA (2214 aa).

The interval 75 to 178 is N-terminal acylcarrier protein transacylase domain (SAT); that stretch reads EWIRTGDSHV…LAVCAGAWKD (104 aa). The region spanning 372-784 is the Ketosynthase family 3 (KS3) domain; the sequence is DESIAIVGAS…GNNTAMIVCQ (413 aa). Residues Cys-532, His-667, and His-707 each act as for beta-ketoacyl synthase activity in the active site. The tract at residues 888 to 1184 is malonyl-CoA:ACP transacylase (MAT) domain; that stretch reads VFAGQTGHRP…AFLSARLGSP (297 aa). The active-site For acyl/malonyl transferase activity is Ser-974. An N-terminal hotdog fold region spans residues 1255–1389; it reads PQLVSVVRSS…GIIKSQEQDR (135 aa). Residues 1255–1566 form the PKS/mFAS DH domain; that stretch reads PQLVSVVRSS…FSKVPVRSLQ (312 aa). The segment at 1265–1560 is product template (PT) domain; that stretch reads GGADPEAAEF…AILGARFSKV (296 aa). The C-terminal hotdog fold stretch occupies residues 1416 to 1566; the sequence is GASVVQGAFV…FSKVPVRSLQ (151 aa). Carrier domains follow at residues 1620–1695 and 1722–1802; these read NEVK…HSRL and KAST…SGAD. Ser-1654 is modified (O-(pantetheine 4'-phosphoryl)serine). Positions 1698–1728 are disordered; the sequence is VPQLSPHDTDRSSDLSAGQPPSTPKASTQEQ. A compositionally biased stretch (polar residues) spans 1711 to 1726; sequence DLSAGQPPSTPKASTQ. An O-(pantetheine 4'-phosphoryl)serine modification is found at Ser-1762. Residues 1805–1827 form a disordered region; that stretch reads GFPRTSDNRRSEEGSVGHVGPEK. Positions 1810–1827 are enriched in basic and acidic residues; that stretch reads SDNRRSEEGSVGHVGPEK. Residues 1958-2210 form a methyltransferase (CMeT) domain region; sequence FPAYRPDHRL…SREADLFRWI (253 aa).

It functions in the pathway secondary metabolite biosynthesis; terpenoid biosynthesis. Non-reducing polyketide synthase; part of the gene cluster that mediates the biosynthesis of diterpenoid pyrones. The first step of the pathway is the synthesis of the alpha-pyrone moiety by the polyketide synthase dpmpA via condensation of one acetyl-CoA starter unit with 3 malonyl-CoA units and 2 methylations. The alpha-pyrone is then combined with geranylgeranyl pyrophosphate (GGPP) formed by the GGPP synthase dpmpD through the action of the prenyltransferase dpmpC to yield a linear alpha-pyrone diterpenoid. Subsequent steps in the diterpenoid pyrone biosynthetic pathway involve the decalin core formation, which is initiated by the epoxidation of the C10-C11 olefin by the FAD-dependent oxidoreductase dpmpE, and is followed by a cyclization cascade catalyzed by the terpene cyclase dpmpB. The short chain dehydrogenase/reductase dpmpG then oxidizes the 8S hydroxy group to a ketone and the short chain dehydrogenase/reductase dpmpH reduces the ketone to the 8R hydroxy group to yield higginsianin B. Higginsianin B is further methylated by the methyltransferase dpmpI to produce the intermediate named FDDP B. The cytochrome P450 monooxygenase dpmpJ then oxidizes the C-26 methyl to primary alcohol, producing the final diterpenoid pyrone with a C-26 primary alcohol on the gamma-pyrone moiety named FDDP C. The protein is Non-reducing polyketide synthase dpmpA of Macrophomina phaseolina (strain MS6) (Charcoal rot fungus).